The primary structure comprises 419 residues: DNA primase DnaG (419 aa).

Residues 168–244 (DTIIVVEGRS…KVDYVARAPE (77 aa)) enclose the Toprim domain. The Mg(2+) site is built by glutamate 174, aspartate 218, and aspartate 220. Composition is skewed to basic and acidic residues over residues 280 to 291 (KPAEEAVKREEE) and 306 to 316 (KAAKPPEEKPP). The segment at 280 to 317 (KPAEEAVKREEEAAAEAKPPAPAVQEKAAKPPEEKPPT) is disordered.

The protein belongs to the archaeal DnaG primase family. In terms of assembly, forms a ternary complex with MCM helicase and DNA. Component of the archaeal exosome complex. The cofactor is Mg(2+).

The catalysed reaction is ssDNA + n NTP = ssDNA/pppN(pN)n-1 hybrid + (n-1) diphosphate.. In terms of biological role, RNA polymerase that catalyzes the synthesis of short RNA molecules used as primers for DNA polymerase during DNA replication. Also part of the exosome, which is a complex involved in RNA degradation. Acts as a poly(A)-binding protein that enhances the interaction between heteromeric, adenine-rich transcripts and the exosome. This is DNA primase DnaG from Aeropyrum pernix (strain ATCC 700893 / DSM 11879 / JCM 9820 / NBRC 100138 / K1).